A 408-amino-acid polypeptide reads, in one-letter code: 26S proteasome regulatory subunit 6B homolog (408 aa).

Ala-2 is subject to N-acetylalanine. At Ser-16 the chain carries Phosphoserine. Residues 28–75 are a coiled coil; that stretch reads EDLYGRLKSLERQLEFTDIQEEYVKDEQKNLKRELLRAQEEVKRIQSV. An ATP-binding site is contributed by 196–203; that stretch reads GPPGTGKT.

It belongs to the AAA ATPase family. In terms of assembly, component of the 19S regulatory particle (RP/PA700) base subcomplex of the 26S proteasome. The 26S proteasome is composed of a core protease (CP), known as the 20S proteasome, capped at one or both ends by the 19S regulatory particle (RP/PA700). The RP/PA700 complex is composed of at least 17 different subunits in two subcomplexes, the base and the lid, which form the portions proximal and distal to the 20S proteolytic core, respectively. In terms of tissue distribution, expressed in dark-grown etiolated seedlings, roots, leaves, stems and flowers.

The protein localises to the cytoplasm. It localises to the nucleus. The 26S proteasome is involved in the ATP-dependent degradation of ubiquitinated proteins. The regulatory (or ATPase) complex confers ATP dependency and substrate specificity to the 26S complex. This Arabidopsis thaliana (Mouse-ear cress) protein is 26S proteasome regulatory subunit 6B homolog (RPT3).